The following is a 365-amino-acid chain: Cobalt-precorrin-5B C(1)-methyltransferase (365 aa).

Belongs to the CbiD family.

It carries out the reaction Co-precorrin-5B + S-adenosyl-L-methionine = Co-precorrin-6A + S-adenosyl-L-homocysteine. It participates in cofactor biosynthesis; adenosylcobalamin biosynthesis; cob(II)yrinate a,c-diamide from sirohydrochlorin (anaerobic route): step 6/10. Catalyzes the methylation of C-1 in cobalt-precorrin-5B to form cobalt-precorrin-6A. In Clostridium perfringens (strain 13 / Type A), this protein is Cobalt-precorrin-5B C(1)-methyltransferase.